The sequence spans 486 residues: UDP-N-acetylmuramate--L-alanine ligase (486 aa).

126–132 (GTHGKTT) provides a ligand contact to ATP.

The protein belongs to the MurCDEF family.

It is found in the cytoplasm. The catalysed reaction is UDP-N-acetyl-alpha-D-muramate + L-alanine + ATP = UDP-N-acetyl-alpha-D-muramoyl-L-alanine + ADP + phosphate + H(+). It functions in the pathway cell wall biogenesis; peptidoglycan biosynthesis. In terms of biological role, cell wall formation. This Pectobacterium carotovorum subsp. carotovorum (strain PC1) protein is UDP-N-acetylmuramate--L-alanine ligase.